We begin with the raw amino-acid sequence, 205 residues long: Cerebellin-3 (205 aa).

The first 32 residues, 1 to 32 (MLGTKRHWPPGPSLSLELPLALTLLALRAGWA), serve as a signal peptide directing secretion. A C1q domain is found at 67–205 (APPGRVAFAA…SFSGFLIFPL (139 aa)). N-linked (GlcNAc...) asparagine glycosylation is present at Asn-90.

In terms of assembly, heterohexamer; disulfide-linked heterotrimers. Interacts with CBLN1. May also form oligomers with CBLN2 and CBLN4.

The protein localises to the endoplasmic reticulum. Its subcellular location is the golgi apparatus. The protein resides in the cis-Golgi network. It localises to the secreted. It is found in the synapse. In terms of biological role, may be involved in synaptic functions in the CNS. The protein is Cerebellin-3 (CBLN3) of Bos taurus (Bovine).